A 447-amino-acid polypeptide reads, in one-letter code: Probable butyrate:acetyl-CoA coenzyme A-transferase (447 aa).

Position 220 to 224 (220 to 224) interacts with CoA; the sequence is GIGGT. The active-site 5-glutamyl coenzyme A thioester intermediate is the Glu-245. The CoA site is built by Ile-320 and Gly-343.

The protein belongs to the acetyl-CoA hydrolase/transferase family.

The protein localises to the cytoplasm. It carries out the reaction butanoate + acetyl-CoA = butanoyl-CoA + acetate. It functions in the pathway lipid metabolism; butanoate metabolism. Coenzyme A-transferase that converts butyrate to butyryl-CoA. Involved in the syntrophic growth of S.wolfei on butyrate in cooperation with methanogens or an appropriate hydrogen-scavenging bacterium, as part of the butyrate oxidation pathway. The sequence is that of Probable butyrate:acetyl-CoA coenzyme A-transferase from Syntrophomonas wolfei subsp. wolfei (strain DSM 2245B / Goettingen).